Here is a 168-residue protein sequence, read N- to C-terminus: Large ribosomal subunit protein uL10 (168 aa).

The protein belongs to the universal ribosomal protein uL10 family. In terms of assembly, part of the ribosomal stalk of the 50S ribosomal subunit. The N-terminus interacts with L11 and the large rRNA to form the base of the stalk. The C-terminus forms an elongated spine to which L12 dimers bind in a sequential fashion forming a multimeric L10(L12)X complex.

In terms of biological role, forms part of the ribosomal stalk, playing a central role in the interaction of the ribosome with GTP-bound translation factors. This Clostridium acetobutylicum (strain ATCC 824 / DSM 792 / JCM 1419 / IAM 19013 / LMG 5710 / NBRC 13948 / NRRL B-527 / VKM B-1787 / 2291 / W) protein is Large ribosomal subunit protein uL10.